Consider the following 175-residue polypeptide: NADH-quinone oxidoreductase subunit I 2 (175 aa).

4Fe-4S ferredoxin-type domains lie at 50 to 82 and 98 to 127; these read HVLQ…IEAA and KVYN…HGHG. Cysteine 62, cysteine 65, cysteine 68, cysteine 72, cysteine 107, cysteine 110, cysteine 113, and cysteine 117 together coordinate [4Fe-4S] cluster.

The protein belongs to the complex I 23 kDa subunit family. NDH-1 is composed of 14 different subunits. Subunits NuoA, H, J, K, L, M, N constitute the membrane sector of the complex. Requires [4Fe-4S] cluster as cofactor.

It is found in the cell inner membrane. It catalyses the reaction a quinone + NADH + 5 H(+)(in) = a quinol + NAD(+) + 4 H(+)(out). Functionally, NDH-1 shuttles electrons from NADH, via FMN and iron-sulfur (Fe-S) centers, to quinones in the respiratory chain. The immediate electron acceptor for the enzyme in this species is believed to be ubiquinone. Couples the redox reaction to proton translocation (for every two electrons transferred, four hydrogen ions are translocated across the cytoplasmic membrane), and thus conserves the redox energy in a proton gradient. The sequence is that of NADH-quinone oxidoreductase subunit I 2 from Koribacter versatilis (strain Ellin345).